We begin with the raw amino-acid sequence, 469 residues long: 24-hydroxycholesterol 7-alpha-hydroxylase (469 aa).

The signal sequence occupies residues 1–23; the sequence is MELISPTVIIILGCLALFLLLQR. The next 3 helical transmembrane spans lie at 267–287, 352–372, and 412–432; these read GLLL…WTLA, VEIL…PFWL, and FQCP…ILIL. Heme is bound at residue Cys-414.

This sequence belongs to the cytochrome P450 family. Heme serves as cofactor. Liver specific.

It localises to the endoplasmic reticulum membrane. It is found in the microsome membrane. It carries out the reaction (24S)-hydroxycholesterol + reduced [NADPH--hemoprotein reductase] + O2 = (24S)-7alpha-dihydroxycholesterol + oxidized [NADPH--hemoprotein reductase] + H2O + H(+). It functions in the pathway steroid metabolism; cholesterol degradation. It participates in lipid metabolism; bile acid biosynthesis. In terms of biological role, a cytochrome P450 monooxygenase involved in neural cholesterol clearance through bile acid synthesis. Catalyzes 7-alpha hydroxylation of (24S)-hydroxycholesterol, a neural oxysterol that is metabolized to bile acids in the liver. Mechanistically, uses molecular oxygen inserting one oxygen atom into a substrate, and reducing the second into a water molecule, with two electrons provided by NADPH via cytochrome P450 reductase (CPR; NADPH-ferrihemoprotein reductase). The sequence is that of 24-hydroxycholesterol 7-alpha-hydroxylase from Homo sapiens (Human).